A 415-amino-acid chain; its full sequence is Imidazolonepropionase (415 aa).

The Fe(3+) site is built by histidine 76 and histidine 78. Positions 76 and 78 each coordinate Zn(2+). 4-imidazolone-5-propanoate is bound by residues arginine 85, tyrosine 148, and histidine 181. Residue tyrosine 148 participates in N-formimidoyl-L-glutamate binding. Histidine 246 serves as a coordination point for Fe(3+). Histidine 246 is a Zn(2+) binding site. Glutamate 249 is a 4-imidazolone-5-propanoate binding site. Position 320 (aspartate 320) interacts with Fe(3+). Aspartate 320 lines the Zn(2+) pocket. Asparagine 322 and glycine 324 together coordinate N-formimidoyl-L-glutamate. Residue threonine 325 participates in 4-imidazolone-5-propanoate binding.

It belongs to the metallo-dependent hydrolases superfamily. HutI family. Zn(2+) is required as a cofactor. Fe(3+) serves as cofactor.

The protein resides in the cytoplasm. It carries out the reaction 4-imidazolone-5-propanoate + H2O = N-formimidoyl-L-glutamate. It participates in amino-acid degradation; L-histidine degradation into L-glutamate; N-formimidoyl-L-glutamate from L-histidine: step 3/3. Functionally, catalyzes the hydrolytic cleavage of the carbon-nitrogen bond in imidazolone-5-propanoate to yield N-formimidoyl-L-glutamate. It is the third step in the universal histidine degradation pathway. The polypeptide is Imidazolonepropionase (Caldanaerobacter subterraneus subsp. tengcongensis (strain DSM 15242 / JCM 11007 / NBRC 100824 / MB4) (Thermoanaerobacter tengcongensis)).